The following is a 906-amino-acid chain: Protein translocase subunit SecA (906 aa).

Residues Gln87, 105–109 (GEGKT), and Asp512 contribute to the ATP site. Residues 839-896 (LEEQQRQQSEAAPRTYTHATAESQLADEEAAGEEGHTTFVRDEQKIGRNDPCPCGSGK) are disordered. Residues 871–886 (EEGHTTFVRDEQKIGR) are compositionally biased toward basic and acidic residues. Residues Cys890, Cys892, Cys901, and His902 each coordinate Zn(2+).

It belongs to the SecA family. Monomer and homodimer. Part of the essential Sec protein translocation apparatus which comprises SecA, SecYEG and auxiliary proteins SecDF-YajC and YidC. Zn(2+) is required as a cofactor.

It localises to the cell inner membrane. Its subcellular location is the cytoplasm. It carries out the reaction ATP + H2O + cellular proteinSide 1 = ADP + phosphate + cellular proteinSide 2.. Part of the Sec protein translocase complex. Interacts with the SecYEG preprotein conducting channel. Has a central role in coupling the hydrolysis of ATP to the transfer of proteins into and across the cell membrane, serving both as a receptor for the preprotein-SecB complex and as an ATP-driven molecular motor driving the stepwise translocation of polypeptide chains across the membrane. The chain is Protein translocase subunit SecA from Aeromonas salmonicida (strain A449).